A 368-amino-acid polypeptide reads, in one-letter code: tRNA-specific 2-thiouridylase MnmA (368 aa).

Residues Gly-11 to Ser-18 and Met-37 contribute to the ATP site. The tract at residues Asn-97–Asp-99 is interaction with target base in tRNA. The active-site Nucleophile is the Cys-102. A disulfide bridge connects residues Cys-102 and Cys-199. An ATP-binding site is contributed by Gly-127. The interaction with tRNA stretch occupies residues Lys-149–Gln-151. Cys-199 acts as the Cysteine persulfide intermediate in catalysis. The tract at residues Arg-311–Tyr-312 is interaction with tRNA.

It belongs to the MnmA/TRMU family. As to quaternary structure, interacts with TusE.

It localises to the cytoplasm. It catalyses the reaction S-sulfanyl-L-cysteinyl-[protein] + uridine(34) in tRNA + AH2 + ATP = 2-thiouridine(34) in tRNA + L-cysteinyl-[protein] + A + AMP + diphosphate + H(+). Functionally, catalyzes the 2-thiolation of uridine at the wobble position (U34) of tRNA(Lys), tRNA(Glu) and tRNA(Gln), leading to the formation of s(2)U34, the first step of tRNA-mnm(5)s(2)U34 synthesis. Sulfur is provided by IscS, via a sulfur-relay system. Binds ATP and its substrate tRNAs. The polypeptide is tRNA-specific 2-thiouridylase MnmA (Escherichia coli O157:H7).